The chain runs to 115 residues: Large ribosomal subunit protein bL20c (115 aa).

Belongs to the bacterial ribosomal protein bL20 family.

It is found in the plastid. The protein resides in the chloroplast. In terms of biological role, binds directly to 23S ribosomal RNA and is necessary for the in vitro assembly process of the 50S ribosomal subunit. It is not involved in the protein synthesizing functions of that subunit. In Chlorella vulgaris (Green alga), this protein is Large ribosomal subunit protein bL20c (rpl20).